Reading from the N-terminus, the 233-residue chain is MPSSAHLQDPPPLLSRTLTQNEGQTSLRQSSSCGPSAASASESLSGSTESRIPHSKMLQGKLPRNIPLEYPAGLYCCYVVIIVLSVAVVALSVALSVKKTAQISTINTYAACPRNWIGVGNKCFYFNEIPSNWTLSQTLCKEQGAELARFDTEEELNFLRRYKGSSGYWFGLHRESSAHPWKWTDNTEYNNSVSIGGDEKHGFLSDNGFSSGRGYIVRKSICRKPNSYTSQCL.

The segment at 1–52 is disordered; sequence MPSSAHLQDPPPLLSRTLTQNEGQTSLRQSSSCGPSAASASESLSGSTESRI. Residues 1-76 are Cytoplasmic-facing; it reads MPSSAHLQDP…PLEYPAGLYC (76 aa). Positions 16–29 are enriched in polar residues; the sequence is RTLTQNEGQTSLRQ. Over residues 30-50 the composition is skewed to low complexity; the sequence is SSSCGPSAASASESLSGSTES. Residues 77-97 form a helical; Signal-anchor for type II membrane protein membrane-spanning segment; the sequence is CYVVIIVLSVAVVALSVALSV. The Extracellular segment spans residues 98 to 233; that stretch reads KKTAQISTIN…KPNSYTSQCL (136 aa). The 110-residue stretch at 119–228 folds into the C-type lectin domain; sequence VGNKCFYFNE…KSICRKPNSY (110 aa). Asparagine 132 carries N-linked (GlcNAc...) asparagine glycosylation.

It is found in the cell membrane. Functionally, lectin-type cell surface receptor. The sequence is that of C-type lectin domain family 2 member D5 (Ocil) from Rattus norvegicus (Rat).